Here is a 511-residue protein sequence, read N- to C-terminus: MIFQSFDLVSALATLAACLVSVALLLAVSQQLWQLRWAATRDKSCKLPIPKGSMGFPLVGETFHWILQGSDFQSSRREKYGNVFKTHLLGRPLIRVTGAENVRKILMGEHHLVSTEWPRSTRMLLGPNSLANSIGDIHRHKRKVFSKIFSHEALESYLPKIQLVIQDTLRVWSSNPESINVYCEAQKLTFRMAIRVLLGFRLSDEELSQLFQVFQQFVENVFSLPVDVPFSGYRRGIRAREMLLKSLEKAIQEKLQNTQGKDYADALDILIESGKEHGKELTMQELKDGTLELIFAAYATTASASTSLIMQLLKHPSVLEKLREELRGNSILHNGCVCEGALRVETISSLHYLDCVIKEILRLFSPVSGGYRTVLQTFELDGFQIPKGWSVLYSIRDTHDTAPVFKDVDVFDPDRFGQDRTEDKDGRFHYLPFGGGVRNCLGKHLAKLFLKVLAIELASMSRFELATRTFPKIMPVPVVHPADELKVRFFGLDSNQNEIMTETEAMLGATV.

C440 provides a ligand contact to heme.

The protein belongs to the cytochrome P450 family. Heme is required as a cofactor.

It localises to the endoplasmic reticulum membrane. The protein resides in the microsome membrane. The catalysed reaction is all-trans-retinoate + reduced [NADPH--hemoprotein reductase] + O2 = all-trans-4-hydroxyretinoate + oxidized [NADPH--hemoprotein reductase] + H2O + H(+). The enzyme catalyses all-trans-retinoate + reduced [NADPH--hemoprotein reductase] + O2 = all-trans-18-hydroxyretinoate + oxidized [NADPH--hemoprotein reductase] + H2O + H(+). In terms of biological role, a cytochrome P450 monooxygenase involved in the metabolism of retinoates (RAs), the active metabolites of vitamin A, and critical signaling molecules in animals. RAs exist as at least four different isomers: all-trans-RA (atRA), 9-cis-RA, 13-cis-RA, and 9,13-dicis-RA, where atRA is considered to be the biologically active isomer, although 9-cis-RA and 13-cis-RA also have activity. Catalyzes the hydroxylation of atRA primarily at C-4 and C-18, thereby contributing to the regulation of atRA homeostasis and signaling. Hydroxylation of atRA limits its biological activity and initiates a degradative process leading to its eventual elimination. Involved in the convertion of atRA to all-trans-4-oxo-RA. Can oxidize all-trans-13,14-dihydroretinoate (DRA) to metabolites which could include all-trans-4-oxo-DRA, all-trans-4-hydroxy-DRA, all-trans-5,8-epoxy-DRA, and all-trans-18-hydroxy-DRA. The chain is Cytochrome P450 26B1 (cyp26b1) from Xenopus tropicalis (Western clawed frog).